We begin with the raw amino-acid sequence, 383 residues long: Probable disease resistance protein At4g19060 (383 aa).

Residues 36-84 (YEKWSSGKQRGSSSKHGNQSTHGDSSPTRNSSGSSKKGRPKANRVETSS) are disordered. Over residues 41-70 (SGKQRGSSSKHGNQSTHGDSSPTRNSSGSS) the composition is skewed to polar residues. 2 consecutive NB-ARC domains span residues 75–184 (PKAN…MFKH) and 207–281 (VKEK…LAKA). Position 121 to 128 (121 to 128 (GKYGVGKT)) interacts with ATP.

Functionally, possible disease resistance protein. The polypeptide is Probable disease resistance protein At4g19060 (Arabidopsis thaliana (Mouse-ear cress)).